The primary structure comprises 98 residues: MPSIFTNIILAFATALLGTLVFRSHLMSSLLCLEGMMLSMFVLSTLIILNMHFTMSFMMPILLLVFAACEAAVGLALLVMVSNTYGLDYIQNLNLLQC.

A run of 3 helical transmembrane segments spans residues 2-22 (PSIF…TLVF), 29-49 (SLLC…LIIL), and 61-81 (ILLL…LVMV).

This sequence belongs to the complex I subunit 4L family. As to quaternary structure, core subunit of respiratory chain NADH dehydrogenase (Complex I) which is composed of 45 different subunits.

The protein localises to the mitochondrion inner membrane. The catalysed reaction is a ubiquinone + NADH + 5 H(+)(in) = a ubiquinol + NAD(+) + 4 H(+)(out). Functionally, core subunit of the mitochondrial membrane respiratory chain NADH dehydrogenase (Complex I) which catalyzes electron transfer from NADH through the respiratory chain, using ubiquinone as an electron acceptor. Part of the enzyme membrane arm which is embedded in the lipid bilayer and involved in proton translocation. This is NADH-ubiquinone oxidoreductase chain 4L (MT-ND4L) from Propithecus diadema diadema (Diademed sifaka).